Reading from the N-terminus, the 81-residue chain is ATP synthase subunit c, chloroplastic (81 aa).

Helical transmembrane passes span 3-23 (PIISAASVIAAGLAVGLASIG) and 57-77 (LAFMEALTIYGLVVALALLFA).

This sequence belongs to the ATPase C chain family. F-type ATPases have 2 components, F(1) - the catalytic core - and F(0) - the membrane proton channel. F(1) has five subunits: alpha(3), beta(3), gamma(1), delta(1), epsilon(1). F(0) has four main subunits: a(1), b(1), b'(1) and c(10-14). The alpha and beta chains form an alternating ring which encloses part of the gamma chain. F(1) is attached to F(0) by a central stalk formed by the gamma and epsilon chains, while a peripheral stalk is formed by the delta, b and b' chains.

It localises to the plastid. It is found in the chloroplast thylakoid membrane. Its function is as follows. F(1)F(0) ATP synthase produces ATP from ADP in the presence of a proton or sodium gradient. F-type ATPases consist of two structural domains, F(1) containing the extramembraneous catalytic core and F(0) containing the membrane proton channel, linked together by a central stalk and a peripheral stalk. During catalysis, ATP synthesis in the catalytic domain of F(1) is coupled via a rotary mechanism of the central stalk subunits to proton translocation. Functionally, key component of the F(0) channel; it plays a direct role in translocation across the membrane. A homomeric c-ring of between 10-14 subunits forms the central stalk rotor element with the F(1) delta and epsilon subunits. The polypeptide is ATP synthase subunit c, chloroplastic (Phaseolus vulgaris (Kidney bean)).